The primary structure comprises 1058 residues: Gem-associated protein 4 (1058 aa).

Methionine 1 is subject to N-acetylmethionine. At threonine 84 the chain carries Phosphothreonine. Phosphoserine is present on residues serine 86 and serine 205. Residues leucine 714–leucine 735 are leucine-zipper.

Part of the core SMN complex that contains SMN1, GEMIN2/SIP1, DDX20/GEMIN3, GEMIN4, GEMIN5, GEMIN6, GEMIN7, GEMIN8 and STRAP/UNRIP. Part of the SMN-Sm complex that contains SMN1, GEMIN2/SIP1, DDX20/GEMIN3, GEMIN4, GEMIN5, GEMIN6, GEMIN7, GEMIN8, STRAP/UNRIP and the Sm proteins SNRPB, SNRPD1, SNRPD2, SNRPD3, SNRPE, SNRPF and SNRPG. Interacts with GEMIN3; the interaction is direct. Interacts with GEMIN5. Interacts with GEMIN8; the interaction is direct. Interacts with several snRNP SM core proteins, including SNRPB, SNRPD1, SNRPD2, SNRPD3 and SNRPE. Interacts with PPP4R2.

It localises to the cytoplasm. The protein resides in the nucleus. Its subcellular location is the nucleolus. The protein localises to the gem. In terms of biological role, the SMN complex catalyzes the assembly of small nuclear ribonucleoproteins (snRNPs), the building blocks of the spliceosome, and thereby plays an important role in the splicing of cellular pre-mRNAs. Most spliceosomal snRNPs contain a common set of Sm proteins SNRPB, SNRPD1, SNRPD2, SNRPD3, SNRPE, SNRPF and SNRPG that assemble in a heptameric protein ring on the Sm site of the small nuclear RNA to form the core snRNP (Sm core). In the cytosol, the Sm proteins SNRPD1, SNRPD2, SNRPE, SNRPF and SNRPG are trapped in an inactive 6S pICln-Sm complex by the chaperone CLNS1A that controls the assembly of the core snRNP. To assemble core snRNPs, the SMN complex accepts the trapped 5Sm proteins from CLNS1A forming an intermediate. Binding of snRNA inside 5Sm triggers eviction of the SMN complex, thereby allowing binding of SNRPD3 and SNRPB to complete assembly of the core snRNP. The chain is Gem-associated protein 4 (GEMIN4) from Homo sapiens (Human).